The sequence spans 182 residues: Isopentenyl-diphosphate Delta-isomerase (182 aa).

Mn(2+)-binding residues include His-25 and His-32. The region spanning 30-164 (LLHLAFSSWL…PWAFSPWMVM (135 aa)) is the Nudix hydrolase domain. Cys-67 is a catalytic residue. Cys-67 is a Mg(2+) binding site. Residue His-69 coordinates Mn(2+). Glu-87 is a binding site for Mg(2+). Glu-114 and Glu-116 together coordinate Mn(2+). Glu-116 is a catalytic residue.

The protein belongs to the IPP isomerase type 1 family. Homodimer. Requires Mg(2+) as cofactor. Mn(2+) is required as a cofactor.

It is found in the cytoplasm. The enzyme catalyses isopentenyl diphosphate = dimethylallyl diphosphate. Its pathway is isoprenoid biosynthesis; dimethylallyl diphosphate biosynthesis; dimethylallyl diphosphate from isopentenyl diphosphate: step 1/1. In terms of biological role, catalyzes the 1,3-allylic rearrangement of the homoallylic substrate isopentenyl (IPP) to its highly electrophilic allylic isomer, dimethylallyl diphosphate (DMAPP). The polypeptide is Isopentenyl-diphosphate Delta-isomerase (Escherichia coli O6:H1 (strain CFT073 / ATCC 700928 / UPEC)).